The primary structure comprises 195 residues: uncharacterized protein (195 aa).

This is an uncharacterized protein from Acidianus hospitalis (AFV-1).